A 232-amino-acid chain; its full sequence is 26S proteasome non-ATPase regulatory subunit 10 (232 aa).

ANK repeat units lie at residues 45-75 (DERT…SPNT), 79-108 (GGWT…DPNT), 112-141 (SKRT…KNRK), 144-173 (TGSA…NINS), 177-206 (EGDT…DTTI), and 210-232 (DSKT…EFKK).

Functionally, acts as a chaperone during the assembly of the 26S proteasome, specifically of the 19S regulatory complex (RC). In Dictyostelium discoideum (Social amoeba), this protein is 26S proteasome non-ATPase regulatory subunit 10 (psmD10).